The following is a 260-amino-acid chain: Ribonuclease HII (260 aa).

The RNase H type-2 domain occupies Leu73–Val260. Asp79, Glu80, and Asp171 together coordinate a divalent metal cation.

The protein belongs to the RNase HII family. Mn(2+) serves as cofactor. The cofactor is Mg(2+).

It localises to the cytoplasm. The catalysed reaction is Endonucleolytic cleavage to 5'-phosphomonoester.. In terms of biological role, endonuclease that specifically degrades the RNA of RNA-DNA hybrids. The polypeptide is Ribonuclease HII (Desulfitobacterium hafniense (strain DSM 10664 / DCB-2)).